We begin with the raw amino-acid sequence, 245 residues long: Leucyl/phenylalanyl-tRNA--protein transferase (245 aa).

This sequence belongs to the L/F-transferase family.

The protein localises to the cytoplasm. It catalyses the reaction N-terminal L-lysyl-[protein] + L-leucyl-tRNA(Leu) = N-terminal L-leucyl-L-lysyl-[protein] + tRNA(Leu) + H(+). The catalysed reaction is N-terminal L-arginyl-[protein] + L-leucyl-tRNA(Leu) = N-terminal L-leucyl-L-arginyl-[protein] + tRNA(Leu) + H(+). It carries out the reaction L-phenylalanyl-tRNA(Phe) + an N-terminal L-alpha-aminoacyl-[protein] = an N-terminal L-phenylalanyl-L-alpha-aminoacyl-[protein] + tRNA(Phe). Its function is as follows. Functions in the N-end rule pathway of protein degradation where it conjugates Leu, Phe and, less efficiently, Met from aminoacyl-tRNAs to the N-termini of proteins containing an N-terminal arginine or lysine. This is Leucyl/phenylalanyl-tRNA--protein transferase from Paraburkholderia xenovorans (strain LB400).